We begin with the raw amino-acid sequence, 509 residues long: MALPWYRVHTVVLNDPGRLIAVHLMHTALVAGWAGSMALYELAVFDPSDPVLNPMWRQGMFVMPFMTRLGITDSWGGWSITGESVSNPGIWSFEGVALSHIILSGMCFLAAIWHWVYWDLELFRDPRTGEPALDLPKIFGIHLFLSGLLCFGFGAFHVTGLFGPGIWVSDAYGVTGKVQPVAPAWGADGFNPFNPGGIAAHHIAAGIFGIFAGIFHLTVRPPQRLYRALRMGNIETVLSSSIAAVFFAAFVTSGTMWYGAAATPIELFGPTRYQWDSGYFQQEIERQVETSVSEGLSESQAWSRIPDKLAFYDYIGNNPAKGGLFRAGPMNKGDGIAEAWLGHPIFRDKDGRELTVRRMPAFFETFPVILVDKDGIIRADIPFRRAESKYSIEQVGVTVDFYGGKLNGQTFKDAPTVKKFARKAQLGEVFEFDRTSLESDGVFRSSPRGWYTFGHANFALLFFFGHLWHGGRTIFRDVFTGIGAEVTEQVEFGAFQKLGDKSTKKQGAV.

Helical transmembrane passes span 21-36 (AVHL…WAGS), 101-115 (IILS…IWHW), 140-156 (GIHL…FGAF), 203-218 (IAAG…FHLT), 237-252 (VLSS…AFVT), and 457-472 (NFAL…HGGR).

Belongs to the PsbB/PsbC family. PsbB subfamily. In terms of assembly, PSII is composed of 1 copy each of membrane proteins PsbA, PsbB, PsbC, PsbD, PsbE, PsbF, PsbH, PsbI, PsbJ, PsbK, PsbL, PsbM, PsbT, PsbX, PsbY, PsbZ, Psb30/Ycf12, at least 3 peripheral proteins of the oxygen-evolving complex and a large number of cofactors. It forms dimeric complexes. Binds multiple chlorophylls. PSII binds additional chlorophylls, carotenoids and specific lipids. is required as a cofactor.

It is found in the plastid. The protein resides in the chloroplast thylakoid membrane. Its function is as follows. One of the components of the core complex of photosystem II (PSII). It binds chlorophyll and helps catalyze the primary light-induced photochemical processes of PSII. PSII is a light-driven water:plastoquinone oxidoreductase, using light energy to abstract electrons from H(2)O, generating O(2) and a proton gradient subsequently used for ATP formation. This chain is Photosystem II CP47 reaction center protein, found in Trieres chinensis (Marine centric diatom).